Consider the following 148-residue polypeptide: Deoxyuridine 5'-triphosphate nucleotidohydrolase (148 aa).

Substrate contacts are provided by residues 67–69, Asn80, 84–86, and Met94; these read RSG and LID.

Belongs to the dUTPase family. Requires Mg(2+) as cofactor.

The catalysed reaction is dUTP + H2O = dUMP + diphosphate + H(+). The protein operates within pyrimidine metabolism; dUMP biosynthesis; dUMP from dCTP (dUTP route): step 2/2. This enzyme is involved in nucleotide metabolism: it produces dUMP, the immediate precursor of thymidine nucleotides and it decreases the intracellular concentration of dUTP so that uracil cannot be incorporated into DNA. The chain is Deoxyuridine 5'-triphosphate nucleotidohydrolase from Burkholderia cenocepacia (strain HI2424).